A 362-amino-acid polypeptide reads, in one-letter code: MTAAAELRPRRVRPVRIWLTLVAMLIAVMVLVGGATRLTESGLSIVEWKPVTGTLPPLNDAQWRDAFEGYKTIPQYRELNAGMTLGEFKTIFWWEWGHRLLGRVIGIAYLLPLLWFLWRGAIAPEWKRALWAIFALGALQGAVGWWMVASGLSQRTEVSQVRLAIHLTLALVIYAAIVWTLRRLAGRPPIVAAARLKFTAIALLALTLVQLFLGALVAGLRAGRMFNTWPLIDGALIPEASRLWFEQPWWKNLFDNHLTVQFDHRMMAYALWALAAWHAIDALRARAGGAAGGALWLFAALSLQAVLGILTLLYQVPIGLALAHQAVGIVVLTLAVLQVERLTASKSKEAPRVMPAPASQRG.

The next 5 membrane-spanning stretches (helical) occupy residues 15-35 (VRIW…VGGA), 104-124 (VIGI…AIAP), 129-149 (ALWA…WMVA), 161-181 (VRLA…VWTL), and 200-220 (AIAL…VAGL). His-264 contributes to the heme binding site. Transmembrane regions (helical) follow at residues 266-285 (MMAY…ALRA), 293-313 (GALW…LTLL), and 316-336 (VPIG…TLAV). His-324 serves as a coordination point for heme.

Belongs to the COX15/CtaA family. Type 2 subfamily. Interacts with CtaB. Heme b is required as a cofactor.

It localises to the cell membrane. The catalysed reaction is Fe(II)-heme o + 2 A + H2O = Fe(II)-heme a + 2 AH2. The protein operates within porphyrin-containing compound metabolism; heme A biosynthesis; heme A from heme O: step 1/1. In terms of biological role, catalyzes the conversion of heme O to heme A by two successive hydroxylations of the methyl group at C8. The first hydroxylation forms heme I, the second hydroxylation results in an unstable dihydroxymethyl group, which spontaneously dehydrates, resulting in the formyl group of heme A. This chain is Heme A synthase, found in Rhodopseudomonas palustris (strain BisB5).